The chain runs to 447 residues: Phosphoglucosamine mutase (447 aa).

Catalysis depends on S102, which acts as the Phosphoserine intermediate. 4 residues coordinate Mg(2+): S102, D241, D243, and D245. At S102 the chain carries Phosphoserine.

The protein belongs to the phosphohexose mutase family. Mg(2+) serves as cofactor. Activated by phosphorylation.

The catalysed reaction is alpha-D-glucosamine 1-phosphate = D-glucosamine 6-phosphate. Its function is as follows. Catalyzes the conversion of glucosamine-6-phosphate to glucosamine-1-phosphate. This is Phosphoglucosamine mutase from Pseudomonas syringae pv. syringae (strain B728a).